A 407-amino-acid chain; its full sequence is Nicotinate phosphoribosyltransferase (407 aa).

Phosphohistidine; by autocatalysis is present on His-228.

The protein belongs to the NAPRTase family. In terms of processing, transiently phosphorylated on a His residue during the reaction cycle. Phosphorylation strongly increases the affinity for substrates and increases the rate of nicotinate D-ribonucleotide production. Dephosphorylation regenerates the low-affinity form of the enzyme, leading to product release.

The catalysed reaction is nicotinate + 5-phospho-alpha-D-ribose 1-diphosphate + ATP + H2O = nicotinate beta-D-ribonucleotide + ADP + phosphate + diphosphate. It participates in cofactor biosynthesis; NAD(+) biosynthesis; nicotinate D-ribonucleotide from nicotinate: step 1/1. 100-fold more active in the presence of saturating ATP. Its function is as follows. Catalyzes the synthesis of beta-nicotinate D-ribonucleotide from nicotinate and 5-phospho-D-ribose 1-phosphate at the expense of ATP. Functions in the deamidating salvage pathway for production of NAD from nicotinamide. Displays a strict preference for nicotinate over nicotinamide substrate. The chain is Nicotinate phosphoribosyltransferase from Acinetobacter baylyi (strain ATCC 33305 / BD413 / ADP1).